The sequence spans 205 residues: GTP cyclohydrolase-2 (205 aa).

A GTP-binding site is contributed by 49–53; it reads RLHSE. The Zn(2+) site is built by C54, C65, and C67. GTP-binding positions include Q70, 92–94, and T114; that span reads EGR. D126 functions as the Proton acceptor in the catalytic mechanism. R128 (nucleophile) is an active-site residue. T149 and K154 together coordinate GTP.

Belongs to the GTP cyclohydrolase II family. Requires Zn(2+) as cofactor.

It carries out the reaction GTP + 4 H2O = 2,5-diamino-6-hydroxy-4-(5-phosphoribosylamino)-pyrimidine + formate + 2 phosphate + 3 H(+). It participates in cofactor biosynthesis; riboflavin biosynthesis; 5-amino-6-(D-ribitylamino)uracil from GTP: step 1/4. Functionally, catalyzes the conversion of GTP to 2,5-diamino-6-ribosylamino-4(3H)-pyrimidinone 5'-phosphate (DARP), formate and pyrophosphate. The chain is GTP cyclohydrolase-2 from Pseudomonas putida (strain ATCC 700007 / DSM 6899 / JCM 31910 / BCRC 17059 / LMG 24140 / F1).